A 242-amino-acid polypeptide reads, in one-letter code: Ras-like protein family member 11A (242 aa).

Residues Glu-17–Leu-241 form a small GTPase-like region. GTP-binding positions include Gly-34–Ser-41, Asp-81–Gly-85, and Asn-147–Asp-150.

The protein belongs to the small GTPase superfamily. Ras family. As to quaternary structure, interacts with UBF/UBTF. As to expression, widely expressed. Down-regulated in prostate tumors compared to normal prostate tissue. High levels found in colon tumor and normal colon tissue followed by small intestine, liver, jejunum, ileum, bladder and aorta. Lowest levels observed in endothelial cells.

The protein localises to the nucleus. It localises to the nucleolus. It catalyses the reaction GTP + H2O = GDP + phosphate + H(+). Regulator of rDNA transcription. Acts in cooperation UBF/UBTF and positively regulates RNA polymerase I transcription. The chain is Ras-like protein family member 11A from Homo sapiens (Human).